A 453-amino-acid polypeptide reads, in one-letter code: Ribosomal protein uS12 methylthiotransferase RimO (453 aa).

The MTTase N-terminal domain occupies 5–120; sequence PKVGFVSLGC…VMQAVHSHLP (116 aa). Positions 14, 50, 79, 151, 155, and 158 each coordinate [4Fe-4S] cluster. The Radical SAM core domain occupies 137–382; that stretch reads LTPRHYAYLK…MEVAEEVSAR (246 aa). Residues 385-453 form the TRAM domain; the sequence is ARKVGKTLKV…ADGHDLWGEV (69 aa).

The protein belongs to the methylthiotransferase family. RimO subfamily. [4Fe-4S] cluster is required as a cofactor.

Its subcellular location is the cytoplasm. The enzyme catalyses L-aspartate(89)-[ribosomal protein uS12]-hydrogen + (sulfur carrier)-SH + AH2 + 2 S-adenosyl-L-methionine = 3-methylsulfanyl-L-aspartate(89)-[ribosomal protein uS12]-hydrogen + (sulfur carrier)-H + 5'-deoxyadenosine + L-methionine + A + S-adenosyl-L-homocysteine + 2 H(+). Its function is as follows. Catalyzes the methylthiolation of an aspartic acid residue of ribosomal protein uS12. The protein is Ribosomal protein uS12 methylthiotransferase RimO of Burkholderia multivorans (strain ATCC 17616 / 249).